Reading from the N-terminus, the 74-residue chain is Exodeoxyribonuclease 7 small subunit (74 aa).

Belongs to the XseB family. In terms of assembly, heterooligomer composed of large and small subunits.

The protein localises to the cytoplasm. It catalyses the reaction Exonucleolytic cleavage in either 5'- to 3'- or 3'- to 5'-direction to yield nucleoside 5'-phosphates.. Bidirectionally degrades single-stranded DNA into large acid-insoluble oligonucleotides, which are then degraded further into small acid-soluble oligonucleotides. In Clostridium botulinum (strain Eklund 17B / Type B), this protein is Exodeoxyribonuclease 7 small subunit.